The following is a 376-amino-acid chain: tRNA-specific 2-thiouridylase MnmA (376 aa).

Residues 16 to 23 (AMSGGVDS) and L42 each bind ATP. C111 serves as the catalytic Nucleophile. A disulfide bond links C111 and C210. Residue G135 participates in ATP binding. Residues 158–160 (KDQ) are interaction with tRNA. C210 (cysteine persulfide intermediate) is an active-site residue.

It belongs to the MnmA/TRMU family.

The protein resides in the cytoplasm. It catalyses the reaction S-sulfanyl-L-cysteinyl-[protein] + uridine(34) in tRNA + AH2 + ATP = 2-thiouridine(34) in tRNA + L-cysteinyl-[protein] + A + AMP + diphosphate + H(+). Catalyzes the 2-thiolation of uridine at the wobble position (U34) of tRNA, leading to the formation of s(2)U34. This Streptomyces avermitilis (strain ATCC 31267 / DSM 46492 / JCM 5070 / NBRC 14893 / NCIMB 12804 / NRRL 8165 / MA-4680) protein is tRNA-specific 2-thiouridylase MnmA.